Consider the following 878-residue polypeptide: AP-2 complex subunit alpha (878 aa).

The protein belongs to the adaptor complexes large subunit family. In terms of assembly, adaptor protein complex 2 (AP-2) is a heterotetramer composed of two large adaptins (alpha-type subunit apl3 and beta-type subunit apl1), a medium chain (mu-type subunit apm4) and a small adaptin (sigma-type subunit aps2).

It is found in the cell membrane. The protein localises to the membrane. It localises to the coated pit. Functionally, adaptins are components of the adaptor complexes which link clathrin to receptors in coated vesicles. Clathrin-associated protein complexes are believed to interact with the cytoplasmic tails of membrane proteins, leading to their selection and concentration. Alpha adaptin is a subunit of the plasma membrane adaptor. This Schizosaccharomyces pombe (strain 972 / ATCC 24843) (Fission yeast) protein is AP-2 complex subunit alpha (apl3).